A 64-amino-acid polypeptide reads, in one-letter code: Large ribosomal subunit protein bL35 (64 aa).

Positions 1-14 (MKNKTHKGTAKRVK) are enriched in basic residues. The disordered stretch occupies residues 1 to 30 (MKNKTHKGTAKRVKVTGSGKLVREQANRRH). The span at 21-30 (LVREQANRRH) shows a compositional bias: basic and acidic residues.

It belongs to the bacterial ribosomal protein bL35 family.

This is Large ribosomal subunit protein bL35 from Corynebacterium efficiens (strain DSM 44549 / YS-314 / AJ 12310 / JCM 11189 / NBRC 100395).